A 299-amino-acid chain; its full sequence is Homoserine kinase (299 aa).

84–94 (PISRGLGSSSA) provides a ligand contact to ATP.

The protein belongs to the GHMP kinase family. Homoserine kinase subfamily.

It is found in the cytoplasm. It carries out the reaction L-homoserine + ATP = O-phospho-L-homoserine + ADP + H(+). Its pathway is amino-acid biosynthesis; L-threonine biosynthesis; L-threonine from L-aspartate: step 4/5. Functionally, catalyzes the ATP-dependent phosphorylation of L-homoserine to L-homoserine phosphate. The protein is Homoserine kinase of Helicobacter hepaticus (strain ATCC 51449 / 3B1).